Here is a 311-residue protein sequence, read N- to C-terminus: HPr kinase/phosphorylase (311 aa).

Catalysis depends on residues histidine 136 and lysine 157. 151–158 (GDSGIGKS) provides a ligand contact to ATP. Serine 158 provides a ligand contact to Mg(2+). The active-site Proton acceptor; for phosphorylation activity. Proton donor; for dephosphorylation activity is aspartate 175. The interval 199–208 (LEIRGLGIIN) is important for the catalytic mechanism of both phosphorylation and dephosphorylation. Glutamate 200 provides a ligand contact to Mg(2+). Arginine 241 is an active-site residue. The tract at residues 262 to 267 (PVRPGR) is important for the catalytic mechanism of dephosphorylation.

It belongs to the HPrK/P family. In terms of assembly, homohexamer. It depends on Mg(2+) as a cofactor.

The catalysed reaction is [HPr protein]-L-serine + ATP = [HPr protein]-O-phospho-L-serine + ADP + H(+). It catalyses the reaction [HPr protein]-O-phospho-L-serine + phosphate + H(+) = [HPr protein]-L-serine + diphosphate. Its function is as follows. Catalyzes the ATP- as well as the pyrophosphate-dependent phosphorylation of a specific serine residue in HPr, a phosphocarrier protein of the phosphoenolpyruvate-dependent sugar phosphotransferase system (PTS). HprK/P also catalyzes the pyrophosphate-producing, inorganic phosphate-dependent dephosphorylation (phosphorolysis) of seryl-phosphorylated HPr (P-Ser-HPr). The two antagonistic activities of HprK/P are regulated by several intracellular metabolites, which change their concentration in response to the absence or presence of rapidly metabolisable carbon sources (glucose, fructose, etc.) in the growth medium. Therefore, by controlling the phosphorylation state of HPr, HPrK/P is a sensor enzyme that plays a major role in the regulation of carbon metabolism and sugar transport: it mediates carbon catabolite repression (CCR), and regulates PTS-catalyzed carbohydrate uptake and inducer exclusion. This chain is HPr kinase/phosphorylase, found in Staphylococcus haemolyticus (strain JCSC1435).